The primary structure comprises 202 residues: Guanylate kinase (202 aa).

The 179-residue stretch at Gly3–Arg181 folds into the Guanylate kinase-like domain. Residue Ala10–Thr17 participates in ATP binding.

The protein belongs to the guanylate kinase family.

Its subcellular location is the cytoplasm. The enzyme catalyses GMP + ATP = GDP + ADP. Its function is as follows. Essential for recycling GMP and indirectly, cGMP. This chain is Guanylate kinase, found in Methylobacillus flagellatus (strain ATCC 51484 / DSM 6875 / VKM B-1610 / KT).